The sequence spans 365 residues: 3-isopropylmalate dehydrogenase (365 aa).

Position 78-91 (78-91 (GKKWNNLPIEKRPE)) interacts with NAD(+). Substrate is bound by residues arginine 99, arginine 109, arginine 139, and aspartate 228. Residues aspartate 228, aspartate 252, and aspartate 256 each coordinate Mg(2+). 286–298 (GSAPDIAGKNIAN) lines the NAD(+) pocket.

It belongs to the isocitrate and isopropylmalate dehydrogenases family. LeuB type 1 subfamily. In terms of assembly, homodimer. Mg(2+) is required as a cofactor. The cofactor is Mn(2+).

It is found in the cytoplasm. It carries out the reaction (2R,3S)-3-isopropylmalate + NAD(+) = 4-methyl-2-oxopentanoate + CO2 + NADH. The protein operates within amino-acid biosynthesis; L-leucine biosynthesis; L-leucine from 3-methyl-2-oxobutanoate: step 3/4. Functionally, catalyzes the oxidation of 3-carboxy-2-hydroxy-4-methylpentanoate (3-isopropylmalate) to 3-carboxy-4-methyl-2-oxopentanoate. The product decarboxylates to 4-methyl-2 oxopentanoate. In Buchnera aphidicola subsp. Macrosiphoniella ludovicianae, this protein is 3-isopropylmalate dehydrogenase.